The chain runs to 318 residues: L-lactate dehydrogenase 1 (318 aa).

Residues valine 17, aspartate 38, lysine 43, tyrosine 69, and 83–84 (GA) each bind NAD(+). Substrate contacts are provided by residues glutamine 86, arginine 92, and 124–127 (NPVD). Residues 122–124 (ATN) and serine 147 each bind NAD(+). 152 to 155 (DTGR) is a binding site for substrate. The beta-D-fructose 1,6-bisphosphate site is built by arginine 157 and histidine 172. Histidine 179 serves as the catalytic Proton acceptor. The residue at position 224 (tyrosine 224) is a Phosphotyrosine. Threonine 233 is a binding site for substrate.

Belongs to the LDH/MDH superfamily. LDH family. In terms of assembly, homotetramer.

Its subcellular location is the cytoplasm. It catalyses the reaction (S)-lactate + NAD(+) = pyruvate + NADH + H(+). Its pathway is fermentation; pyruvate fermentation to lactate; (S)-lactate from pyruvate: step 1/1. With respect to regulation, allosterically activated by fructose 1,6-bisphosphate (FBP). Functionally, catalyzes the conversion of lactate to pyruvate. This chain is L-lactate dehydrogenase 1, found in Peribacillus psychrosaccharolyticus (Bacillus psychrosaccharolyticus).